A 321-amino-acid polypeptide reads, in one-letter code: MIKKIAVLTSGGDAPGMNAAIRGVVRSALAEGLEVFGIYDGYQGLYNNKIKQLNRYSVSDVINRGGTFLGSARFPEFKDPNVRAKCAEILRSHGIDALVVIGGDGSYMGAKLLTEEHGFPCVGLPGTIDNDVAGTDYTIGYQTALQTAVDAIDRLRDTSSSHQRISIVEIMGRHCSDLTISAGIAGGCEYIVASEIEFNREELIQQIERSIIRGKRHAIIAITELLTDVHSLAKEIEARVGHETRATVLGHIQRGGSPCAFDRILASRMGAYAVDLLLQGKGGYCVGIQNEQLVHHDIIDAINNMQRVFKADWLKVAKRLE.

Glycine 12 is an ATP binding site. ADP is bound by residues 22–26 (RGVVR) and 55–60 (RYSVSD). ATP-binding positions include 73–74 (RF) and 103–106 (GDGS). Aspartate 104 provides a ligand contact to Mg(2+). 127 to 129 (TID) contributes to the substrate binding site. The active-site Proton acceptor is the aspartate 129. Arginine 156 contributes to the ADP binding site. Residues arginine 164 and 171-173 (MGR) contribute to the substrate site. Residues 187-189 (GCE), arginine 213, and 215-217 (KRH) each bind ADP. Residues glutamate 224, arginine 245, and 251–254 (HIQR) contribute to the substrate site.

The protein belongs to the phosphofructokinase type A (PFKA) family. ATP-dependent PFK group I subfamily. Prokaryotic clade 'B1' sub-subfamily. As to quaternary structure, homotetramer. It depends on Mg(2+) as a cofactor.

It is found in the cytoplasm. It carries out the reaction beta-D-fructose 6-phosphate + ATP = beta-D-fructose 1,6-bisphosphate + ADP + H(+). The protein operates within carbohydrate degradation; glycolysis; D-glyceraldehyde 3-phosphate and glycerone phosphate from D-glucose: step 3/4. With respect to regulation, allosterically activated by ADP and other diphosphonucleosides, and allosterically inhibited by phosphoenolpyruvate. Catalyzes the phosphorylation of D-fructose 6-phosphate to fructose 1,6-bisphosphate by ATP, the first committing step of glycolysis. The chain is ATP-dependent 6-phosphofructokinase from Haemophilus influenzae (strain 86-028NP).